The chain runs to 438 residues: Succinyl-CoA:glutarate CoA-transferase (438 aa).

The N-terminal 31 residues, 1 to 31, are a transit peptide targeting the mitochondrion; the sequence is MLATLARVAALRRTCLFSGRGGGRGLWTGRP. Catalysis depends on Asp-205, which acts as the Nucleophile. Lys-394 bears the N6-acetyllysine mark.

Belongs to the CoA-transferase III family. Highly expressed in kidney. Intermediate expression in liver, skeletal muscle and pancreas. Little to no expression detected in other tissues examined.

The protein resides in the mitochondrion. The catalysed reaction is glutarate + succinyl-CoA = glutaryl-CoA + succinate. The enzyme catalyses 3-hydroxy-3-methylglutarate + succinyl-CoA = (3S)-3-hydroxy-3-methylglutaryl-CoA + succinate. It carries out the reaction 3-hydroxy-3-methylglutarate + glutaryl-CoA = (3S)-3-hydroxy-3-methylglutaryl-CoA + glutarate. It catalyses the reaction hexanedioate + glutaryl-CoA = hexanedioyl-CoA + glutarate. The catalysed reaction is itaconate + glutaryl-CoA = itaconyl-CoA + glutarate. The enzyme catalyses itaconate + succinyl-CoA = itaconyl-CoA + succinate. Inhibited by valsartan and losartan carboxylate. In terms of biological role, coenzyme A (CoA) transferase that reversibly catalyzes the transfer of a CoA moiety from a dicarboxyl-CoA to a dicarboxylate in a metabolite recycling process. Displays preference for succinyl-CoA and glutarate-CoA as dicarboxyl-CoA donors and glutarate, succinate, adipate/hexanedioate, itaconate and 3-hydroxy-3-methylglutarate as dicarboxylate acceptors. Acts on intermediates or end products of lysine and tryptophan degradation pathway, in particular catalyzes succinyl-CoA-dependent reesterification of free glutarate into glutaryl-CoA to prevent renal excretion of glutarate. Upon inflammation, may convert macrophage-derived itaconate to itaconyl-CoA in erythroid precursors where it negatively regulates the TCA cycle and heme synthesis to limit erythroid differentiation in the context of stress erythropoiesis. The sequence is that of Succinyl-CoA:glutarate CoA-transferase from Homo sapiens (Human).